Consider the following 108-residue polypeptide: uncharacterized protein (108 aa).

Basic and acidic residues predominate over residues Met-1 to Asp-10. A disordered region spans residues Met-1–Gln-27. Residues Ile-12–Asn-22 show a composition bias toward polar residues.

This is an uncharacterized protein from Saccharomyces cerevisiae (strain ATCC 204508 / S288c) (Baker's yeast).